Consider the following 329-residue polypeptide: NAD(P)H-dependent D-xylose reductase (329 aa).

Residue Y52 is the Proton donor of the active site. H114 contacts substrate. NAD(+) contacts are provided by residues 173-174 (SN), 222-231 (SSFGPVSFLE), and 278-288 (KSSKKERLLDN).

The protein belongs to the aldo/keto reductase family.

The enzyme catalyses xylitol + NAD(+) = D-xylose + NADH + H(+). It carries out the reaction xylitol + NADP(+) = D-xylose + NADPH + H(+). Its pathway is carbohydrate metabolism; D-xylose degradation. Its function is as follows. Reduces D-xylose into xylitol. The polypeptide is NAD(P)H-dependent D-xylose reductase (XYL1) (Kluyveromyces lactis (strain ATCC 8585 / CBS 2359 / DSM 70799 / NBRC 1267 / NRRL Y-1140 / WM37) (Yeast)).